The sequence spans 490 residues: Glutamyl-tRNA(Gln) amidotransferase subunit A (490 aa).

Active-site charge relay system residues include K80 and S155. The active-site Acyl-ester intermediate is S179.

Belongs to the amidase family. GatA subfamily. In terms of assembly, heterotrimer of A, B and C subunits.

The catalysed reaction is L-glutamyl-tRNA(Gln) + L-glutamine + ATP + H2O = L-glutaminyl-tRNA(Gln) + L-glutamate + ADP + phosphate + H(+). Functionally, allows the formation of correctly charged Gln-tRNA(Gln) through the transamidation of misacylated Glu-tRNA(Gln) in organisms which lack glutaminyl-tRNA synthetase. The reaction takes place in the presence of glutamine and ATP through an activated gamma-phospho-Glu-tRNA(Gln). The protein is Glutamyl-tRNA(Gln) amidotransferase subunit A of Brevibacillus brevis (strain 47 / JCM 6285 / NBRC 100599).